The chain runs to 844 residues: Proto-oncogene vav (844 aa).

The Calponin-homology (CH) domain maps to 1 to 119; it reads MELWRQCTHW…YTLSALSWTP (119 aa). In terms of domain architecture, DH spans 193-372; sequence KRCCCLREIQ…RDLAQCVNEV (180 aa). The PH domain maps to 401–503; it reads RPKIDGELKI…WMEQFEMAIS (103 aa). A Phorbol-ester/DAG-type zinc finger spans residues 514–563; the sequence is GHDFQMFSFEETTSCKACQMLLRGTFYQGYRCQRCRAPAHKECLGRVPPC. Residues 567–589 form a disordered region; it reads GQDYSGTMKKDKPHRRAQDKKRN. Residues 591-659 form the SH3 1 domain; it reads LGLPKMEVCQ…PCNRVKPYVH (69 aa). Residues 670–764 enclose the SH2 domain; it reads WYAGPMERAG…SLDTTLQFPF (95 aa). The region spanning 781-841 is the SH3 2 domain; that stretch reads KIFGTAKARY…PSNYVEEDYS (61 aa). Phosphotyrosine is present on residues tyrosine 825 and tyrosine 843.

Interacts with SHB. Interacts with APS, DOCK2, GRB2, GRB3, DOCK2, SLA, TEC and ZNF655/VIK. Interacts with SIAH2; without leading to its degradation. Associates with BLNK, PLCG1, GRB2 and NCK1 in a B-cell antigen receptor-dependent fashion. Interacts with CBLB; which inhibits tyrosine phosphorylation and down-regulates activity. May interact with CCPG1. Interacts with CLNK. Interacts with THEMIS2. Interacts with NEK3 and this interaction is prolactin-dependent. Interacts with ITK. Interacts with PTK2B/PYK2. Interacts with HCK. Interacts with PTK2B/PYK2. Interacts (via SH2 domain) with SYK. Interacts with ANKRD54. Interacts with CD6. Interacts with LCP2; this interaction plays a role in TCR-mediated cytokine production. Phosphorylated by FYN. Phosphorylated on tyrosine residues by HCK in response to IFNG and bacterial lipopolysaccharide (LPS).

Couples tyrosine kinase signals with the activation of the Rho/Rac GTPases, thus leading to cell differentiation and/or proliferation. This chain is Proto-oncogene vav (VAV1), found in Bos taurus (Bovine).